We begin with the raw amino-acid sequence, 266 residues long: 3-methyl-2-oxobutanoate hydroxymethyltransferase (266 aa).

Residues Asp-46 and Asp-85 each contribute to the Mg(2+) site. Residues 46 to 47 (DS), Asp-85, and Lys-115 each bind 3-methyl-2-oxobutanoate. A Mg(2+)-binding site is contributed by Glu-117. Catalysis depends on Glu-183, which acts as the Proton acceptor.

It belongs to the PanB family. Homodecamer; pentamer of dimers. Mg(2+) serves as cofactor.

The protein localises to the cytoplasm. It carries out the reaction 3-methyl-2-oxobutanoate + (6R)-5,10-methylene-5,6,7,8-tetrahydrofolate + H2O = 2-dehydropantoate + (6S)-5,6,7,8-tetrahydrofolate. It participates in cofactor biosynthesis; (R)-pantothenate biosynthesis; (R)-pantoate from 3-methyl-2-oxobutanoate: step 1/2. Catalyzes the reversible reaction in which hydroxymethyl group from 5,10-methylenetetrahydrofolate is transferred onto alpha-ketoisovalerate to form ketopantoate. This chain is 3-methyl-2-oxobutanoate hydroxymethyltransferase, found in Trichlorobacter lovleyi (strain ATCC BAA-1151 / DSM 17278 / SZ) (Geobacter lovleyi).